Consider the following 423-residue polypeptide: D-tagatose-1,6-bisphosphate aldolase subunit GatZ (423 aa).

The protein belongs to the GatZ/KbaZ family. GatZ subfamily. In terms of assembly, forms a complex with GatY.

The protein operates within carbohydrate metabolism; D-tagatose 6-phosphate degradation; D-glyceraldehyde 3-phosphate and glycerone phosphate from D-tagatose 6-phosphate: step 2/2. Functionally, component of the tagatose-1,6-bisphosphate aldolase GatYZ that is required for full activity and stability of the Y subunit. Could have a chaperone-like function for the proper and stable folding of GatY. When expressed alone, GatZ does not show any aldolase activity. Is involved in the catabolism of galactitol. In Salmonella agona (strain SL483), this protein is D-tagatose-1,6-bisphosphate aldolase subunit GatZ.